We begin with the raw amino-acid sequence, 145 residues long: Transcriptional regulator MraZ (145 aa).

SpoVT-AbrB domains lie at 5–47 (EHQH…PLPE) and 76–119 (AVEC…AKDQ).

The protein belongs to the MraZ family. Forms oligomers.

It is found in the cytoplasm. The protein localises to the nucleoid. This is Transcriptional regulator MraZ from Pelotomaculum thermopropionicum (strain DSM 13744 / JCM 10971 / SI).